A 160-amino-acid polypeptide reads, in one-letter code: Methyl-coenzyme M reductase operon protein D (160 aa).

As to quaternary structure, MCR is composed of three subunits: alpha, beta, and gamma. The function of proteins C and D is not known.

This is Methyl-coenzyme M reductase operon protein D (mcrD) from Methanococcus vannielii.